The chain runs to 469 residues: Fe(3+)-Zn(2+) purple acid phosphatase 12 (469 aa).

A signal peptide spans 1–28 (MSSRSDLKIKRVSLIIFLLSVLVEFCYG). Asn-114 carries an N-linked (GlcNAc...) asparagine glycan. Asp-168 is a binding site for Fe cation. Asn-176 is a glycosylation site (N-linked (GlcNAc...) asparagine). Residues Asp-197 and Tyr-200 each contribute to the Fe cation site. Residue Asp-197 coordinates Zn(2+). Asn-234 is a binding site for Zn(2+). Position 234 (Asn-234) interacts with substrate. Asn-307 is a glycosylation site (N-linked (GlcNAc...) asparagine). Residue His-319 coordinates Zn(2+). His-329 functions as the Proton donor in the catalytic mechanism. His-356 lines the Zn(2+) pocket. 356–358 (HVH) is a substrate binding site. Position 358 (His-358) interacts with Fe cation. Asn-429 is a glycosylation site (N-linked (GlcNAc...) asparagine).

It belongs to the metallophosphoesterase superfamily. Purple acid phosphatase family. Homodimer; disulfide-linked. Requires Fe cation as cofactor. Zn(2+) serves as cofactor. In terms of tissue distribution, expressed in roots, stems, leaves, flowers and siliques.

The protein localises to the secreted. It catalyses the reaction a phosphate monoester + H2O = an alcohol + phosphate. This chain is Fe(3+)-Zn(2+) purple acid phosphatase 12 (PAP12), found in Arabidopsis thaliana (Mouse-ear cress).